The chain runs to 487 residues: Glutamyl-tRNA(Gln) amidotransferase subunit A (487 aa).

Active-site charge relay system residues include Lys-77 and Ser-152. Residue Ser-176 is the Acyl-ester intermediate of the active site.

This sequence belongs to the amidase family. GatA subfamily. Heterotrimer of A, B and C subunits.

It carries out the reaction L-glutamyl-tRNA(Gln) + L-glutamine + ATP + H2O = L-glutaminyl-tRNA(Gln) + L-glutamate + ADP + phosphate + H(+). Functionally, allows the formation of correctly charged Gln-tRNA(Gln) through the transamidation of misacylated Glu-tRNA(Gln) in organisms which lack glutaminyl-tRNA synthetase. The reaction takes place in the presence of glutamine and ATP through an activated gamma-phospho-Glu-tRNA(Gln). The chain is Glutamyl-tRNA(Gln) amidotransferase subunit A from Limosilactobacillus fermentum (strain NBRC 3956 / LMG 18251) (Lactobacillus fermentum).